We begin with the raw amino-acid sequence, 365 residues long: Sulfate/thiosulfate import ATP-binding protein CysA (365 aa).

In terms of domain architecture, ABC transporter spans 3–237 (IEIANIKKSF…PATRFVLEFM (235 aa)). 35–42 (GPSGSGKT) lines the ATP pocket.

Belongs to the ABC transporter superfamily. Sulfate/tungstate importer (TC 3.A.1.6) family. As to quaternary structure, the complex is composed of two ATP-binding proteins (CysA), two transmembrane proteins (CysT and CysW) and a solute-binding protein (CysP).

The protein resides in the cell inner membrane. It carries out the reaction sulfate(out) + ATP + H2O = sulfate(in) + ADP + phosphate + H(+). It catalyses the reaction thiosulfate(out) + ATP + H2O = thiosulfate(in) + ADP + phosphate + H(+). Functionally, part of the ABC transporter complex CysAWTP involved in sulfate/thiosulfate import. Responsible for energy coupling to the transport system. The chain is Sulfate/thiosulfate import ATP-binding protein CysA from Escherichia coli (strain K12).